The chain runs to 124 residues: Small ribosomal subunit protein uS12 (124 aa).

Residues 1-28 (MPTISQLVGSERKRLTKKTKSPALKSCP) are disordered. D89 is subject to 3-methylthioaspartic acid. Residues 104 to 124 (TAGVKDRRQSRSKYGAKAPKD) are disordered.

This sequence belongs to the universal ribosomal protein uS12 family. As to quaternary structure, part of the 30S ribosomal subunit. Contacts proteins S8 and S17. May interact with IF1 in the 30S initiation complex.

Functionally, with S4 and S5 plays an important role in translational accuracy. Its function is as follows. Interacts with and stabilizes bases of the 16S rRNA that are involved in tRNA selection in the A site and with the mRNA backbone. Located at the interface of the 30S and 50S subunits, it traverses the body of the 30S subunit contacting proteins on the other side and probably holding the rRNA structure together. The combined cluster of proteins S8, S12 and S17 appears to hold together the shoulder and platform of the 30S subunit. The sequence is that of Small ribosomal subunit protein uS12 from Prochlorococcus marinus (strain MIT 9301).